A 236-amino-acid polypeptide reads, in one-letter code: 2-C-methyl-D-erythritol 4-phosphate cytidylyltransferase (236 aa).

This sequence belongs to the IspD/TarI cytidylyltransferase family. IspD subfamily. As to quaternary structure, homodimer.

The enzyme catalyses 2-C-methyl-D-erythritol 4-phosphate + CTP + H(+) = 4-CDP-2-C-methyl-D-erythritol + diphosphate. Its pathway is isoprenoid biosynthesis; isopentenyl diphosphate biosynthesis via DXP pathway; isopentenyl diphosphate from 1-deoxy-D-xylulose 5-phosphate: step 2/6. In terms of biological role, catalyzes the formation of 4-diphosphocytidyl-2-C-methyl-D-erythritol from CTP and 2-C-methyl-D-erythritol 4-phosphate (MEP). The protein is 2-C-methyl-D-erythritol 4-phosphate cytidylyltransferase of Salmonella newport (strain SL254).